A 617-amino-acid polypeptide reads, in one-letter code: UvrABC system protein C (617 aa).

One can recognise a GIY-YIG domain in the interval 12-91 (EKPGVYLMKD…IKKYKPKYNV (80 aa)). In terms of domain architecture, UVR spans 203–238 (EWLVEKLKEEMQKAADELRFEEAARLRDQIFAIEKI).

The protein belongs to the UvrC family. Interacts with UvrB in an incision complex.

It localises to the cytoplasm. In terms of biological role, the UvrABC repair system catalyzes the recognition and processing of DNA lesions. UvrC both incises the 5' and 3' sides of the lesion. The N-terminal half is responsible for the 3' incision and the C-terminal half is responsible for the 5' incision. The polypeptide is UvrABC system protein C (Caldanaerobacter subterraneus subsp. tengcongensis (strain DSM 15242 / JCM 11007 / NBRC 100824 / MB4) (Thermoanaerobacter tengcongensis)).